Consider the following 134-residue polypeptide: Cytochrome b5 (134 aa).

The Cytochrome b5 heme-binding domain occupies 5-81 (KKVLGFEEVS…MEKYYIGEID (77 aa)). Heme-binding residues include histidine 40 and histidine 64. The helical transmembrane segment at 107 to 127 (FMIKILQFLVPILILGLALVV) threads the bilayer.

Belongs to the cytochrome b5 family.

The protein resides in the endoplasmic reticulum membrane. It is found in the microsome membrane. In terms of biological role, membrane bound hemoprotein which function as an electron carrier for several membrane bound oxygenases. This chain is Cytochrome b5 (CYB5), found in Brassica oleracea var. botrytis (Cauliflower).